The primary structure comprises 461 residues: Fumarate hydratase class II (461 aa).

Substrate contacts are provided by residues 97-99 (SGT), 127-130 (HPND), 137-139 (SSN), and Thr-185. The Proton donor/acceptor role is filled by His-186. Residue Ser-316 is part of the active site. Residues Ser-317 and 322–324 (KVN) each bind substrate.

The protein belongs to the class-II fumarase/aspartase family. Fumarase subfamily. In terms of assembly, homotetramer.

It localises to the cytoplasm. It carries out the reaction (S)-malate = fumarate + H2O. The protein operates within carbohydrate metabolism; tricarboxylic acid cycle; (S)-malate from fumarate: step 1/1. Its function is as follows. Involved in the TCA cycle. Catalyzes the stereospecific interconversion of fumarate to L-malate. In Staphylococcus aureus (strain Mu50 / ATCC 700699), this protein is Fumarate hydratase class II.